We begin with the raw amino-acid sequence, 116 residues long: Non-specific lipid-transfer protein 5 (116 aa).

The first 24 residues, Met1–Gly24, serve as a signal peptide directing secretion. 4 cysteine pairs are disulfide-bonded: Cys28–Cys75, Cys38–Cys52, Cys53–Cys98, and Cys73–Cys112.

It belongs to the plant LTP family.

Plant non-specific lipid-transfer proteins transfer phospholipids as well as galactolipids across membranes. May play a role in wax or cutin deposition in the cell walls of expanding epidermal cells and certain secretory tissues. This is Non-specific lipid-transfer protein 5 from Lens culinaris (Lentil).